We begin with the raw amino-acid sequence, 1663 residues long: Cortactin-binding protein 2 (1663 aa).

Disordered stretches follow at residues 1–23 (MATD…AGAA), 203–222 (KKKT…RSTE), 367–440 (GASV…LHPG), 454–478 (GNAN…SPTS), and 498–614 (RFTS…LPPK). Positions 119–276 (KKMQERMSAQ…EQLKKGSDSK (158 aa)) form a coiled coil. Residues 386–396 (PSTGSTSDPTS) show a composition bias toward low complexity. R498 is subject to Asymmetric dimethylarginine. A compositionally biased stretch (polar residues) spans 583-593 (TVASTPSSLPQ). 6 ANK repeats span residues 709–739 (GRPT…DINY), 743–772 (DGHS…QVNA), 776–805 (NGFT…NINH), 809–838 (GGQT…NRSV), 842–871 (DGWT…PAHG), and 912–942 (EGWT…EPER). The segment at 1448-1483 (KKGESGAWRKVNTSPRRKSGRFSLPTWNKPDLSTEG) is disordered. S1524 is modified (phosphoserine). The tract at residues 1560–1663 (DSSGNNPVLS…KNGHLEKPNK (104 aa)) is disordered. Polar residues-rich tracts occupy residues 1561-1574 (SSGN…TINN) and 1582-1599 (KEVS…SNSK). The span at 1624 to 1638 (SQNTKRSSSSSNTRQ) shows a compositional bias: low complexity. Over residues 1645-1663 (SKEENWNLHKNGHLEKPNK) the composition is skewed to basic and acidic residues.

As to quaternary structure, interacts with CTTN/cortactin SH3 domain. Interacts with STRN, STRN4/zinedin and MOB4/phocein; this interactions mediate the association with the STRIPAK core complex and may regulate dendritic spine distribution of the STRIPAK complex in hippocampal neurons. Activation of glutamate receptors weakens the interaction with STRN and STRN4.

The protein localises to the cytoplasm. It is found in the cell cortex. Its subcellular location is the cell projection. It localises to the dendritic spine. Functionally, regulates the dendritic spine distribution of CTTN/cortactin in hippocampal neurons, and thus controls dendritic spinogenesis and dendritic spine maintenance. Associates with the striatin-interacting phosphatase and kinase (STRIPAK) core complex to regulate dendritic spine distribution of the STRIPAK complex in hippocampal neurons. This Gorilla gorilla gorilla (Western lowland gorilla) protein is Cortactin-binding protein 2 (CTTNBP2).